The following is a 112-amino-acid chain: uncharacterized protein (112 aa).

2 helical membrane-spanning segments follow: residues 44–63 and 68–90; these read VITG…LHSL and LAAL…KLVH.

It is found in the cell membrane. This is an uncharacterized protein from Archaeoglobus fulgidus (strain ATCC 49558 / DSM 4304 / JCM 9628 / NBRC 100126 / VC-16).